The following is a 1292-amino-acid chain: Sorbin and SH3 domain-containing protein 1 (1292 aa).

Disordered stretches follow at residues 1–29, 73–158, 214–275, and 318–381; these read MSSE…ATAD, LRAS…AQPE, HLQR…SSPL, and REQQ…MDEV. A compositionally biased stretch (low complexity) spans 74-89; it reads RASSSYRETPSSSPAS. T82 carries the phosphothreonine modification. S86 and S89 each carry phosphoserine. Over residues 93-102 the composition is skewed to basic and acidic residues; that stretch reads TRQHESKPGL. A phosphoserine mark is found at E105, L114, V137, S146, S242, and S259. Over residues 114 to 128 the composition is skewed to polar residues; it reads LSSSADANGNAQPSS. Pro residues predominate over residues 240-252; it reads SFSPPPPLVPPAP. The segment covering 266–275 has biased composition (polar residues); that stretch reads AVSSTDSSPL. Phosphoserine is present on S341. Residue T344 is modified to Phosphothreonine. E346 and S350 each carry phosphoserine. The segment covering 354-365 has biased composition (basic and acidic residues); the sequence is AIEKRAKDDSRR. In terms of domain architecture, SoHo spans 366 to 469; it reads VVKSTQDLSD…YSPRYSFSED (104 aa). Phosphoserine is present on residues S369, S374, and N387. Positions 405–534 are disordered; it reads LNRDTPEENP…TRKYRAEPKS (130 aa). The segment covering 437–450 has biased composition (polar residues); that stretch reads YTPTYQFPASTPSP. Phosphoserine is present on residues S452, S465, D469, S472, R478, and S481. A compositionally biased stretch (basic and acidic residues) spans 510-534; the sequence is SSERNDWEPPDKKVDTRKYRAEPKS. At Y536 the chain carries Phosphotyrosine; by ABL1. S556, N603, S609, and S640 each carry phosphoserine. Residues 628–650 are disordered; it reads APSANVPQSSAISPTPEISSETP. Residue Y654 is modified to Phosphotyrosine; by ABL1. 2 positions are modified to phosphoserine: S665 and K700. The tract at residues 692 to 716 is disordered; it reads PLQGLSGLKRPSSSASTKDSESPRH. T708 is subject to Phosphothreonine. S713, I730, D735, and I765 each carry phosphoserine. Residues 793–852 enclose the SH3 1 domain; it reads SEMRPARAKFDFKAQTLKELPLQKGDIVYIYKQIDQNWYEGEHHGRVGIFPRTYIELLPP. Phosphothreonine is present on T862. Positions 867–928 constitute an SH3 2 domain; the sequence is LEYGEAIAKF…PITYVDVIKR (62 aa). V923 carries the phosphoserine modification. Y937 is modified (phosphotyrosine). Over residues 944 to 954 the composition is skewed to low complexity; sequence SSPSRSATASP. 4 disordered regions span residues 944–976, 1041–1064, 1106–1150, and 1162–1230; these read SSPS…SRRA, SDRP…TYSL, QLSD…KKSC, and TEQR…SQTS. A phosphoserine mark is found at S945 and S953. The segment covering 955–971 has biased composition (polar residues); that stretch reads QFSSHSKLITPAPSSLP. Polar residues predominate over residues 1106 to 1117; sequence QLSDAFSSQSKR. The segment covering 1119-1136 has biased composition (basic and acidic residues); that stretch reads PWREESGQYERKAERGAG. The segment covering 1162 to 1172 has biased composition (polar residues); the sequence is TEQRLSDLNTP. Over residues 1192 to 1203 the composition is skewed to basic and acidic residues; it reads QTERHRGGEQAG. The span at 1211 to 1230 shows a compositional bias: polar residues; it reads GSQQPQAQQRRVTPDRSQTS. Q1213 is modified (phosphoserine). The SH3 3 domain occupies 1231 to 1292; the sequence is QDLFSYQALY…PGNYVKPLYL (62 aa). Y1240 is subject to Phosphotyrosine; by ABL1.

Interacts (via third SH3 domain) with the Ten-1 ICD form of TENM1; the interaction induces the translocation of SORBS1 to the nucleus. Interacts with INSM1. Interacts with the long isoform of AFDN and with VCL. AFDN and VCL bind to SORBS1 in a competitive manner and do not form a ternary complex. Interacts with ABL1, CBL, CBLB and INPPL1/SHIP2 through the third SH3 domain. Interaction with ABL1 occurs only after insulin stimulation while this has no effect on the interaction with INPPL1. Interacts with the insulin receptor but dissociates from it following insulin stimulation. Also interacts with SCA7, PTK2/FAK1 and flotillin. Interacts (via SH3 domain 2) with PXN. Post-translationally, O-glycosylated. In terms of tissue distribution, detected in skeletal muscle (at protein level). Widely expressed with highest levels in heart and skeletal muscle.

It is found in the cell junction. The protein resides in the adherens junction. It localises to the cell membrane. Its subcellular location is the cytoplasm. The protein localises to the cytoskeleton. It is found in the focal adhesion. The protein resides in the nucleus. It localises to the nucleus matrix. Plays a role in tyrosine phosphorylation of CBL by linking CBL to the insulin receptor. Required for insulin-stimulated glucose transport. Involved in formation of actin stress fibers and focal adhesions. The protein is Sorbin and SH3 domain-containing protein 1 of Homo sapiens (Human).